The chain runs to 572 residues: Phosphoenolpyruvate-protein phosphotransferase (572 aa).

The active-site Tele-phosphohistidine intermediate is H191. Phosphoenolpyruvate contacts are provided by R298 and R334. Mg(2+) is bound by residues E433 and D457. Residues 456 to 457 and R467 contribute to the phosphoenolpyruvate site; that span reads ND. C504 (proton donor) is an active-site residue.

It belongs to the PEP-utilizing enzyme family. In terms of assembly, homodimer. The cofactor is Mg(2+).

It is found in the cytoplasm. The enzyme catalyses L-histidyl-[protein] + phosphoenolpyruvate = N(pros)-phospho-L-histidyl-[protein] + pyruvate. Its function is as follows. General (non sugar-specific) component of the phosphoenolpyruvate-dependent sugar phosphotransferase system (sugar PTS). This major carbohydrate active-transport system catalyzes the phosphorylation of incoming sugar substrates concomitantly with their translocation across the cell membrane. Enzyme I transfers the phosphoryl group from phosphoenolpyruvate (PEP) to the phosphoryl carrier protein (HPr). This Staphylococcus aureus (strain MRSA252) protein is Phosphoenolpyruvate-protein phosphotransferase (ptsI).